The following is a 370-amino-acid chain: Aminomethyltransferase (370 aa).

It belongs to the GcvT family. In terms of assembly, the glycine cleavage system is composed of four proteins: P, T, L and H.

It carries out the reaction N(6)-[(R)-S(8)-aminomethyldihydrolipoyl]-L-lysyl-[protein] + (6S)-5,6,7,8-tetrahydrofolate = N(6)-[(R)-dihydrolipoyl]-L-lysyl-[protein] + (6R)-5,10-methylene-5,6,7,8-tetrahydrofolate + NH4(+). Functionally, the glycine cleavage system catalyzes the degradation of glycine. In Prochlorococcus marinus (strain MIT 9515), this protein is Aminomethyltransferase.